The following is a 263-amino-acid chain: Indole-3-glycerol phosphate synthase (263 aa).

It belongs to the TrpC family.

The enzyme catalyses 1-(2-carboxyphenylamino)-1-deoxy-D-ribulose 5-phosphate + H(+) = (1S,2R)-1-C-(indol-3-yl)glycerol 3-phosphate + CO2 + H2O. It participates in amino-acid biosynthesis; L-tryptophan biosynthesis; L-tryptophan from chorismate: step 4/5. This is Indole-3-glycerol phosphate synthase from Aliarcobacter butzleri (strain RM4018) (Arcobacter butzleri).